A 1161-amino-acid chain; its full sequence is DNA-directed RNA polymerase subunit beta' (1161 aa).

Zn(2+) is bound by residues cysteine 60, cysteine 62, cysteine 75, and cysteine 78. The Mg(2+) site is built by aspartate 449, aspartate 451, and aspartate 453. The Zn(2+) site is built by cysteine 790, cysteine 864, cysteine 871, and cysteine 874.

Belongs to the RNA polymerase beta' chain family. In terms of assembly, the RNAP catalytic core consists of 2 alpha, 1 beta, 1 beta' and 1 omega subunit. When a sigma factor is associated with the core the holoenzyme is formed, which can initiate transcription. Mg(2+) serves as cofactor. It depends on Zn(2+) as a cofactor.

It carries out the reaction RNA(n) + a ribonucleoside 5'-triphosphate = RNA(n+1) + diphosphate. In terms of biological role, DNA-dependent RNA polymerase catalyzes the transcription of DNA into RNA using the four ribonucleoside triphosphates as substrates. The chain is DNA-directed RNA polymerase subunit beta' from Clostridioides difficile (strain 630) (Peptoclostridium difficile).